Here is a 138-residue protein sequence, read N- to C-terminus: High mobility group B protein 4 (138 aa).

Disordered regions lie at residues 1–41 and 105–138; these read MKGG…PPSA and LKLA…EDDD. The span at 18 to 29 shows a compositional bias: basic residues; it reads KTRGRKAGKKTK. Positions 35–104 form a DNA-binding region, HMG box; the sequence is PKRPPSAFFV…EYIKNVQQYN (70 aa). Residues S123 and S130 each carry the phosphoserine modification. Positions 126–138 are enriched in acidic residues; it reads DEAVSEEEAEDDD.

The protein belongs to the HMGB family. In terms of tissue distribution, mostly expressed roots and flowers, and, to a lower extent, in stems and leaves.

It localises to the nucleus. Its subcellular location is the cytoplasm. The protein localises to the cytosol. Its function is as follows. Binds preferentially double-stranded DNA. This is High mobility group B protein 4 (HMGB4) from Arabidopsis thaliana (Mouse-ear cress).